Here is a 588-residue protein sequence, read N- to C-terminus: Schlafen family member 12-like (588 aa).

A helical membrane pass occupies residues I566–F586.

Belongs to the Schlafen family.

It localises to the membrane. In Homo sapiens (Human), this protein is Schlafen family member 12-like (SLFN12L).